Reading from the N-terminus, the 458-residue chain is MEKGYKMNRSSVYRNMFSEKPVRVSSIRRSYTARGNPQGSLIIPSSSRSRVSYVTPISSRSVRLVRSSAPVVASSSNLDFTLVDAMNSEFKVNRTNEKAEMIELNDRLANFLDKVRSLEQQNKMLLAELEQVKGKRPSKIGDLYEQELRELRLQIDQISNEKSRVEVERDNLADDLQKLREKLQDEVIQREDAENNLAAFRQDVDDACLARLDLERKVETLQEEIMFLKKLHEEEIIELQAQIRDSQFKVEMDVVRPDLTAALQDVRSQFDKLASKNIAETEELYKSKLADITDSASRNNDALRLAKQENNEYRRQVQSLTCEIDALKGTNESLERQMQDVEDRYNMETTNAQDTISHLEDEISHLKDEMTRHLQEYQELLTVKMALDVEIATYRKLLEGEENRISMPLPSFGSMSLSDAMFEQQPFENRTSKKKIVIKTVETSGGDVISETTQKIED.

The tract at residues 1-100 is head; the sequence is MEKGYKMNRS…KVNRTNEKAE (100 aa). An IF rod domain is found at 97–405; sequence EKAEMIELND…KLLEGEENRI (309 aa). A tail region spans residues 406 to 458; that stretch reads SMPLPSFGSMSLSDAMFEQQPFENRTSKKKIVIKTVETSGGDVISETTQKIED.

Belongs to the intermediate filament family.

The protein is Type III intermediate filament of Tetronarce californica (Pacific electric ray).